The primary structure comprises 588 residues: Adenine deaminase (588 aa).

Belongs to the metallo-dependent hydrolases superfamily. Adenine deaminase family. As to quaternary structure, homodimer. It depends on Mn(2+) as a cofactor.

It carries out the reaction adenine + H2O + H(+) = hypoxanthine + NH4(+). This chain is Adenine deaminase, found in Escherichia coli (strain SMS-3-5 / SECEC).